The primary structure comprises 415 residues: MAAPVDDMFSRCVDSAKASNCVDVRFINNVKGKGLFAKKPFKKGDTIFIERPLVSSQFLWNALYKYRACEYCLRALETAEENARRLSGLPALILPHPELCKVRPDRHQACPQCQVMYCSSECRQAAMDQYHKILCLGPSNDDPDHPVNKLQDAWRSVHFPPETSSVMILAKMVATIKQTQDKERWQRLFTNFCSRTANEEEEIVHKLLGEKFQGQLGLLRNLFTTALYEDRLSQWFTPEGFRSLFSLVGTNGQGIGTSSLSQWVHACDALELPRQQREQLDAFIDQLYKDIDKETGDFLNCEGSGLFLLQSSCNHSCVPNAEASFPENNFLLHLTALGDIGPGEEICISYLDCCQRDRSRHSRHKILRENYLFICSCQKCLSQMDDADMTSEDEEEVEGEGETEGEDMEDEMTDV.

An SET domain is found at 20–351 (NCVDVRFINN…PGEEICISYL (332 aa)). An MYND-type zinc finger spans residues 95–135 (PHPELCKVRPDRHQACPQCQVMYCSSECRQAAMDQYHKILC). Tyr350 provides a ligand contact to S-adenosyl-L-methionine. Residues 388 to 415 (DMTSEDEEEVEGEGETEGEDMEDEMTDV) are disordered.

This sequence belongs to the class V-like SAM-binding methyltransferase superfamily. Expressed at high levels in the ovary and at lower levels in the fin, testis and brain.

Its subcellular location is the cytoplasm. The enzyme catalyses L-lysyl-[protein] + 3 S-adenosyl-L-methionine = N(6),N(6),N(6)-trimethyl-L-lysyl-[protein] + 3 S-adenosyl-L-homocysteine + 3 H(+). It carries out the reaction L-lysyl(20)-[histone H4] + 3 S-adenosyl-L-methionine = N(6),N(6),N(6)-trimethyl-L-lysyl(20)-[histone H4] + 3 S-adenosyl-L-homocysteine + 3 H(+). The catalysed reaction is L-lysyl(36)-[histone H3] + 3 S-adenosyl-L-methionine = N(6),N(6),N(6)-trimethyl-L-lysyl(36)-[histone H3] + 3 S-adenosyl-L-homocysteine + 3 H(+). In terms of biological role, protein-lysine N-trimethyltransferase that specifically catalyzes trimethylation of 'Lys-22' of the RPL40/eL40 subunit of the 60S ribosome, thereby promoting translation elongation and protein synthesis. May also act as a histone methyltransferase in the context of histone octamers, but not on nucleosome substrates: trimethylates 'Lys-36' of histone H3 and 'Lys-20' of histone H4 to form H3K36me3 and H4K20me3, respectively. The histone methyltransferase activity, which is independent of its SET domain, is however unsure in vivo. Plays a crucial role in hematopoiesis during embryogenesis by negatively regulating expression of genes related to both primitive and definitive hematopoiesis. This Danio rerio (Zebrafish) protein is Protein-lysine N-trimethyltransferase SMYD5.